The primary structure comprises 153 residues: MSQARTLHRLIAPAVEALGFELVGCELFRRGATTILQVFVDKPGGIGLDECAKVSRQISAVLDVEDPIRGRYTLEVSSPGLERPLYTANHYRRFIGNKAKIRLREPREGQRQFRGMVVAVDNEEQVTLQLDNKILKVSLGEIEKANLIADFEG.

Belongs to the RimP family.

The protein localises to the cytoplasm. Its function is as follows. Required for maturation of 30S ribosomal subunits. The polypeptide is Ribosome maturation factor RimP (Coxiella burnetii (strain RSA 331 / Henzerling II)).